A 597-amino-acid chain; its full sequence is Elongation factor 4 (597 aa).

A tr-type G domain is found at Asp2–Lys184. GTP-binding positions include Asp14 to Thr19 and Asn131 to Asp134.

The protein belongs to the TRAFAC class translation factor GTPase superfamily. Classic translation factor GTPase family. LepA subfamily.

It is found in the cell inner membrane. The enzyme catalyses GTP + H2O = GDP + phosphate + H(+). Its function is as follows. Required for accurate and efficient protein synthesis under certain stress conditions. May act as a fidelity factor of the translation reaction, by catalyzing a one-codon backward translocation of tRNAs on improperly translocated ribosomes. Back-translocation proceeds from a post-translocation (POST) complex to a pre-translocation (PRE) complex, thus giving elongation factor G a second chance to translocate the tRNAs correctly. Binds to ribosomes in a GTP-dependent manner. In Burkholderia lata (strain ATCC 17760 / DSM 23089 / LMG 22485 / NCIMB 9086 / R18194 / 383), this protein is Elongation factor 4.